The chain runs to 1978 residues: Dedicator of cytokinesis protein 4 (1978 aa).

Residues 6–67 (EHEKYGVVIA…PSSYVHLKNA (62 aa)) form the SH3 domain. Y167 is modified (phosphotyrosine). The residue at position 193 (T193) is a Phosphothreonine. The C2 DOCK-type domain maps to 401–574 (RNDLYITVER…ESFWITSFLC (174 aa)). Residues 1199–1605 (KTELNKEEMY…FGIQEFPACI (407 aa)) form the DOCKER domain. A phosphoserine mark is found at S1608, S1616, S1623, S1627, S1629, and S1640. Disordered regions lie at residues 1657–1738 (SQAS…IYPT) and 1751–1978 (IGDG…VSQL). A compositionally biased stretch (low complexity) spans 1681 to 1712 (PSPSTSSLSSTHSASPNVTSSAPSSARASPLL). Phosphoserine is present on S1778. The SH3-binding signature appears at 1797 to 1803 (PPVPPRP). The segment covering 1804-1818 (TQTASPARHTTSVSP) has biased composition (polar residues). Over residues 1842–1872 (SPGLSSNSPVLSGSYSSGISSLSRCSTSETS) the composition is skewed to low complexity. Positions 1873–1882 (GFENQANEQS) are enriched in polar residues. Residues 1885 to 1895 (VPVPVPVPVPV) show a composition bias toward pro residues. Residues 1953-1966 (SHLENGTRRTEPGP) are compositionally biased toward basic and acidic residues.

This sequence belongs to the DOCK family. As to quaternary structure, interacts with nucleotide-free Rap1; functions as a guanine nucleotide exchange factor (GEF) for Rap1. Interacts (via DOCKER domain) with RAC1; functions as a guanine nucleotide exchange factor (GEF) for RAC1. Interacts with the SH3 domain of CRK. Interacts with FASLG. Interacts with ELMO2 and EPHA2; mediates activation of RAC1 by EPHA2. Interacts with USH1C (via PDZ 1 domain). In terms of tissue distribution, expressed in inner ear (at protein level).

It localises to the cell membrane. It is found in the cytoplasm. Its subcellular location is the cytosol. Functions as a guanine nucleotide exchange factor (GEF) that promotes the exchange of GDP to GTP, converting inactive GDP-bound small GTPases into their active GTP-bound form. Involved in regulation of adherens junction between cells. Plays a role in cell migration. In terms of biological role, has a higher guanine nucleotide exchange factor activity compared to other isoforms. The sequence is that of Dedicator of cytokinesis protein 4 (Dock4) from Mus musculus (Mouse).